The chain runs to 146 residues: Hemoglobin subunit beta (146 aa).

The 145-residue stretch at 2–146 (HWTAEEKQLI…VAHALARKYH (145 aa)) folds into the Globin domain. Residues His-63 and His-92 each coordinate heme b.

Belongs to the globin family. As to quaternary structure, heterotetramer of two alpha chains and two beta chains. Red blood cells.

Involved in oxygen transport from the lung to the various peripheral tissues. This chain is Hemoglobin subunit beta (HBB), found in Ciconia ciconia (White stork).